The following is a 152-amino-acid chain: Small ribosomal subunit protein uS15 (152 aa).

The protein belongs to the universal ribosomal protein uS15 family. As to quaternary structure, part of the 30S ribosomal subunit.

This chain is Small ribosomal subunit protein uS15, found in Saccharolobus solfataricus (strain ATCC 35092 / DSM 1617 / JCM 11322 / P2) (Sulfolobus solfataricus).